A 209-amino-acid chain; its full sequence is Uridine kinase (209 aa).

An ATP-binding site is contributed by 12-19 (GGSGGGKT).

Belongs to the uridine kinase family.

The protein resides in the cytoplasm. The enzyme catalyses uridine + ATP = UMP + ADP + H(+). It catalyses the reaction cytidine + ATP = CMP + ADP + H(+). It functions in the pathway pyrimidine metabolism; CTP biosynthesis via salvage pathway; CTP from cytidine: step 1/3. The protein operates within pyrimidine metabolism; UMP biosynthesis via salvage pathway; UMP from uridine: step 1/1. In Streptococcus agalactiae serotype III (strain NEM316), this protein is Uridine kinase.